The sequence spans 317 residues: Beta-ketoacyl-[acyl-carrier-protein] synthase III (317 aa).

Residues C112 and H244 contribute to the active site. Positions 245–249 (QANIR) are ACP-binding. The active site involves N274.

It belongs to the thiolase-like superfamily. FabH family. As to quaternary structure, homodimer.

The protein localises to the cytoplasm. It catalyses the reaction malonyl-[ACP] + acetyl-CoA + H(+) = 3-oxobutanoyl-[ACP] + CO2 + CoA. Its pathway is lipid metabolism; fatty acid biosynthesis. Functionally, catalyzes the condensation reaction of fatty acid synthesis by the addition to an acyl acceptor of two carbons from malonyl-ACP. Catalyzes the first condensation reaction which initiates fatty acid synthesis and may therefore play a role in governing the total rate of fatty acid production. Possesses both acetoacetyl-ACP synthase and acetyl transacylase activities. Its substrate specificity determines the biosynthesis of branched-chain and/or straight-chain of fatty acids. In Rickettsia massiliae (strain Mtu5), this protein is Beta-ketoacyl-[acyl-carrier-protein] synthase III.